The sequence spans 515 residues: 2,3-bisphosphoglycerate-independent phosphoglycerate mutase (515 aa).

The Mn(2+) site is built by Asp14 and Ser63. Ser63 is a catalytic residue. Substrate is bound by residues His124, 154–155 (RD), Arg186, Arg192, 259–262 (RADR), and Lys334. Mn(2+) is bound by residues Asp401, His405, Asp442, His443, and His460.

The protein belongs to the BPG-independent phosphoglycerate mutase family. Mg(2+) serves as cofactor. Mn(2+) is required as a cofactor.

The enzyme catalyses (2R)-2-phosphoglycerate = (2R)-3-phosphoglycerate. Its pathway is carbohydrate degradation; glycolysis; pyruvate from D-glyceraldehyde 3-phosphate: step 3/5. Activity is not affected by 2,3-bisphosphoglycerate. Catalyzes the interconversion of 2-phosphoglycerate and 3-phosphoglycerate. This is 2,3-bisphosphoglycerate-independent phosphoglycerate mutase from Brugia malayi (Filarial nematode worm).